The sequence spans 719 residues: Delta-1-pyrroline-5-carboxylate synthase (719 aa).

Residues Met1–Arg293 are glutamate 5-kinase. Substrate-binding residues include Ser57, Asp154, and Asn173. ATP-binding positions include Ser193–Asp194 and Arg233–Lys239. A gamma-glutamyl phosphate reductase region spans residues Asp294–Ser719.

The protein in the N-terminal section; belongs to the glutamate 5-kinase family. In the C-terminal section; belongs to the gamma-glutamyl phosphate reductase family. As to expression, expressed at high levels in leaves and is inducible in roots subjected to salt stress.

It catalyses the reaction L-glutamate + ATP = L-glutamyl 5-phosphate + ADP. The catalysed reaction is L-glutamate 5-semialdehyde + phosphate + NADP(+) = L-glutamyl 5-phosphate + NADPH + H(+). The protein operates within amino-acid biosynthesis; L-proline biosynthesis; L-glutamate 5-semialdehyde from L-glutamate: step 1/2. It participates in amino-acid biosynthesis; L-proline biosynthesis; L-glutamate 5-semialdehyde from L-glutamate: step 2/2. Its activity is regulated as follows. Feedback regulated by proline. In terms of biological role, P5CS plays a key role in proline biosynthesis, leading to osmoregulation in plants. The chain is Delta-1-pyrroline-5-carboxylate synthase (P5CS) from Mesembryanthemum crystallinum (Common ice plant).